The chain runs to 907 residues: Cytochrome b561, DM13 and DOMON domain-containing protein At5g54830 (907 aa).

The first 24 residues, 1–24 (MCDQRPNLLGSLVLLGFFIFFVNG), serve as a signal peptide directing secretion. The DM13 domain maps to 31–139 (SSLIGHESEF…ASDFGHVLLS (109 aa)). The interval 144-172 (SDTSKAESPPSESNDVAPGKSNNSEPFKA) is disordered. Over residues 153 to 168 (PSESNDVAPGKSNNSE) the composition is skewed to polar residues. DOMON domains are found at residues 184-329 (DKYR…WALG) and 524-645 (QQVK…WAMG). Residues 653–850 (LTERNMHSVT…CVVTVAYLEY (198 aa)) enclose the Cytochrome b561 domain. The helical transmembrane segment at 685-705 (VLGVHGFMMFLAWGILLPGGI) threads the bilayer. 2 residues coordinate heme b: histidine 689 and histidine 723. A run of 4 helical transmembrane segments spans residues 730–750 (GLAI…GFSF), 754–774 (HVKF…NAWL), 795–815 (SHSI…FTGM), and 829–849 (GLNL…AYLE). Heme b is bound by residues histidine 754 and histidine 796. Residues 884 to 897 (GGFRDKDDEDRNGG) are compositionally biased toward basic and acidic residues. The tract at residues 884–907 (GGFRDKDDEDRNGGRMEIQLEPLK) is disordered.

Heme b is required as a cofactor.

The protein resides in the membrane. May act as a catecholamine-responsive trans-membrane electron transporter. This chain is Cytochrome b561, DM13 and DOMON domain-containing protein At5g54830, found in Arabidopsis thaliana (Mouse-ear cress).